Reading from the N-terminus, the 83-residue chain is Small ribosomal subunit protein uS17 (83 aa).

It belongs to the universal ribosomal protein uS17 family. In terms of assembly, part of the 30S ribosomal subunit.

Functionally, one of the primary rRNA binding proteins, it binds specifically to the 5'-end of 16S ribosomal RNA. The polypeptide is Small ribosomal subunit protein uS17 (Francisella philomiragia subsp. philomiragia (strain ATCC 25017 / CCUG 19701 / FSC 153 / O#319-036)).